The sequence spans 738 residues: Sporulation kinase E (738 aa).

PAS domains follow at residues 29 to 99 (ELNQ…FKKG), 150 to 220 (NEQL…NRKG), 271 to 342 (SEER…YGEI), and 391 to 462 (SELK…FDEM). One can recognise a Histidine kinase domain in the interval 523 to 729 (GIAHEIRNPM…VFHITLPVRQ (207 aa)). Position 526 is a phosphohistidine; by autocatalysis (His-526).

The enzyme catalyses ATP + protein L-histidine = ADP + protein N-phospho-L-histidine.. Its function is as follows. Phosphorylates the sporulation-regulatory protein spo0A under biofilm growth conditions. Also able to weakly phosphorylate spo0F. This is Sporulation kinase E (kinE) from Bacillus subtilis (strain 168).